The chain runs to 416 residues: Dihydrolipoyllysine-residue succinyltransferase component of 2-oxoglutarate dehydrogenase complex (416 aa).

In terms of domain architecture, Lipoyl-binding spans 3-78; it reads IVDVKVPQLS…VADEIIAKID (76 aa). An N6-lipoyllysine modification is found at Lys44. Positions 115–152 constitute a Peripheral subunit-binding (PSBD) domain; it reads VAMPSAAKLMAEAGLSAGQVAGTGKDGRITKGDALAAA. Catalysis depends on residues His387 and Asp391.

This sequence belongs to the 2-oxoacid dehydrogenase family. In terms of assembly, forms a 24-polypeptide structural core with octahedral symmetry. Part of the 2-oxoglutarate dehydrogenase (OGDH) complex composed of E1 (2-oxoglutarate dehydrogenase), E2 (dihydrolipoamide succinyltransferase) and E3 (dihydrolipoamide dehydrogenase); the complex contains multiple copies of the three enzymatic components (E1, E2 and E3). (R)-lipoate serves as cofactor.

The enzyme catalyses N(6)-[(R)-dihydrolipoyl]-L-lysyl-[protein] + succinyl-CoA = N(6)-[(R)-S(8)-succinyldihydrolipoyl]-L-lysyl-[protein] + CoA. The protein operates within amino-acid degradation; L-lysine degradation via saccharopine pathway; glutaryl-CoA from L-lysine: step 6/6. In terms of biological role, E2 component of the 2-oxoglutarate dehydrogenase (OGDH) complex which catalyzes the second step in the conversion of 2-oxoglutarate to succinyl-CoA and CO(2). The sequence is that of Dihydrolipoyllysine-residue succinyltransferase component of 2-oxoglutarate dehydrogenase complex (sucB) from Cupriavidus necator (strain ATCC 17699 / DSM 428 / KCTC 22496 / NCIMB 10442 / H16 / Stanier 337) (Ralstonia eutropha).